We begin with the raw amino-acid sequence, 320 residues long: Annexin A5 (320 aa).

The residue at position 2 (Ala-2) is an N-acetylalanine. Annexin repeat units lie at residues 15–86, 87–158, 170–242, and 246–317; these read FDER…ALMK, PSRL…VLLQ, AQVE…AVVK, and SIPA…LLCG. A Glycyl lysine isopeptide (Lys-Gly) (interchain with G-Cter in SUMO1); alternate cross-link involves residue Lys-29. Lys-29 participates in a covalent cross-link: Glycyl lysine isopeptide (Lys-Gly) (interchain with G-Cter in SUMO2); alternate. Phosphoserine is present on Ser-37. N6-acetyllysine occurs at positions 70, 76, 79, 97, and 101. Lys-290 is subject to N6-succinyllysine. A [IL]-x-C-x-x-[DE] motif motif is present at residues 314–319; that stretch reads LLCGED.

Belongs to the annexin family. Monomer. Binds ATRX and EIF5B. Interacts with hepatitis B virus (HBV). Post-translationally, S-nitrosylation is induced by interferon-gamma and oxidatively-modified low-densitity lipoprotein (LDL(ox)) possibly implicating the iNOS-S100A8/9 transnitrosylase complex.

Its function is as follows. This protein is an anticoagulant protein that acts as an indirect inhibitor of the thromboplastin-specific complex, which is involved in the blood coagulation cascade. The polypeptide is Annexin A5 (ANXA5) (Homo sapiens (Human)).